Reading from the N-terminus, the 115-residue chain is UPF0295 protein BLi00901/BL05075 (115 aa).

The next 2 membrane-spanning stretches (helical) occupy residues 18–38 (LVFIGFIIMYVGVFFRSSVLL) and 41–61 (VFMILGVLSILLSTAVYFWIG).

The protein belongs to the UPF0295 family.

It is found in the cell membrane. This is UPF0295 protein BLi00901/BL05075 from Bacillus licheniformis (strain ATCC 14580 / DSM 13 / JCM 2505 / CCUG 7422 / NBRC 12200 / NCIMB 9375 / NCTC 10341 / NRRL NRS-1264 / Gibson 46).